A 447-amino-acid polypeptide reads, in one-letter code: ATP-dependent protease ATPase subunit HslU (447 aa).

ATP is bound by residues I18, 60–65 (GVGKTE), D259, E325, and R397.

This sequence belongs to the ClpX chaperone family. HslU subfamily. As to quaternary structure, a double ring-shaped homohexamer of HslV is capped on each side by a ring-shaped HslU homohexamer. The assembly of the HslU/HslV complex is dependent on binding of ATP.

It localises to the cytoplasm. Functionally, ATPase subunit of a proteasome-like degradation complex; this subunit has chaperone activity. The binding of ATP and its subsequent hydrolysis by HslU are essential for unfolding of protein substrates subsequently hydrolyzed by HslV. HslU recognizes the N-terminal part of its protein substrates and unfolds these before they are guided to HslV for hydrolysis. In Burkholderia lata (strain ATCC 17760 / DSM 23089 / LMG 22485 / NCIMB 9086 / R18194 / 383), this protein is ATP-dependent protease ATPase subunit HslU.